The sequence spans 421 residues: Bone morphogenetic protein 10 (421 aa).

A signal peptide spans 1–21 (MGSLVLPLSAVFCLVAHSASG). Positions 22–313 (SPIMGLEQSP…IDDSSARIRR (292 aa)) are excised as a propeptide. N-linked (GlcNAc...) asparagine glycans are attached at residues asparagine 67 and asparagine 131. 3 disulfide bridges follow: cysteine 320–cysteine 386, cysteine 349–cysteine 418, and cysteine 353–cysteine 420.

It belongs to the TGF-beta family. As to quaternary structure, homodimer; disulfide-linked. Interacts with FBN1 (via N-terminal domain) and FBN2. Interacts with ENG. In the embryo, expressed exclusively in the ventricular trabecular myocardium of the developing heart from 9.0 dpc-13.5 dpc. By 16.5 dpc-18.5 dpc, only detectable in atria. Highly expressed in the adult heart where it is found in the right atrium but not in the left atrium. Lower levels in adult liver and lung.

Its subcellular location is the secreted. In terms of biological role, required for maintaining the proliferative activity of embryonic cardiomyocytes by preventing premature activation of the negative cell cycle regulator CDKN1C/p57KIP and maintaining the required expression levels of cardiogenic factors such as MEF2C and NKX2-5. Acts as a ligand for ACVRL1/ALK1, BMPR1A/ALK3 and BMPR1B/ALK6, leading to activation of SMAD1, SMAD5 and SMAD8 transcription factors. Inhibits endothelial cell migration and growth. May reduce cell migration and cell matrix adhesion in breast cancer cell lines. The sequence is that of Bone morphogenetic protein 10 (Bmp10) from Mus musculus (Mouse).